Here is a 606-residue protein sequence, read N- to C-terminus: Thrombospondin-related anonymous protein (606 aa).

Positions 1-24 are cleaved as a signal peptide; sequence MKLLGNSKYFFVVLLLCISVFLNG. The region spanning 43 to 228 is the VWFA domain; the sequence is DLHILLDGSG…TMIKPFLSKV (186 aa). Residues 235–281 enclose the TSP type-1 domain; it reads VALCGKWEEWSECSTTCDNGTKIRKRKVLHPNCAGEMTAPCKVRDCP. The segment at 301-541 is disordered; that stretch reads PVEPIEPAEP…SKKQSKSNNG (241 aa). Composition is skewed to low complexity over residues 409–425, 440–450, and 459–479; these read ENPFIIPDEPIEPIIAP, ELPNNLPESPS, and PNDNGDNSNNTINSNKNIPNK. 2 stretches are compositionally biased toward basic and acidic residues: residues 487-504 and 516-532; these read NPYKGQEERIPKPHRSND and DKLEPEIPSKDYEENKS. The chain crosses the membrane as a helical span at residues 544–564; the sequence is IAGGIIGGLAIIGCIGVGYNF.

Interacts (via integrin-like A-domain) with Anopheles gambiae saglin/SG1F; the interaction probably promotes sporozoite invasion of salivary gland. Interacts (via integrin-like A-domain) with human AHSG; the interaction promotes sporozoite invasion of hepatocytes and formation of exoerythrocytic forms of parasites in human hepatoma HepG2 cells.

It localises to the cell membrane. The protein resides in the cytoplasm. Promotes parasite ability to invade host hepatocytes. Promotes parasite ability to invade mosquito salivary glands. Required for sporozoite gliding motility. This chain is Thrombospondin-related anonymous protein, found in Plasmodium berghei (strain Anka).